Consider the following 222-residue polypeptide: Exosome complex component Rrp4 (222 aa).

An S1 motif domain is found at 63–131; it reads GDLVIGRVTG…EINRVKLTLR (69 aa).

This sequence belongs to the RRP4 family. In terms of assembly, component of the archaeal exosome complex. Forms a trimer of Rrp4 and/or Csl4 subunits. The trimer associates with a hexameric ring-like arrangement composed of 3 Rrp41-Rrp42 heterodimers.

It localises to the cytoplasm. Its function is as follows. Non-catalytic component of the exosome, which is a complex involved in RNA degradation. Increases the RNA binding and the efficiency of RNA degradation. Confers strong poly(A) specificity to the exosome. This Methanosphaera stadtmanae (strain ATCC 43021 / DSM 3091 / JCM 11832 / MCB-3) protein is Exosome complex component Rrp4.